The primary structure comprises 108 residues: Nucleoid-associated protein Lcho_1975 (108 aa).

This sequence belongs to the YbaB/EbfC family. Homodimer.

The protein localises to the cytoplasm. The protein resides in the nucleoid. Binds to DNA and alters its conformation. May be involved in regulation of gene expression, nucleoid organization and DNA protection. The polypeptide is Nucleoid-associated protein Lcho_1975 (Leptothrix cholodnii (strain ATCC 51168 / LMG 8142 / SP-6) (Leptothrix discophora (strain SP-6))).